The following is a 509-amino-acid chain: ATP synthase subunit alpha (509 aa).

Residue 169–176 (GDRQTGKT) participates in ATP binding.

The protein belongs to the ATPase alpha/beta chains family. In terms of assembly, F-type ATPases have 2 components, CF(1) - the catalytic core - and CF(0) - the membrane proton channel. CF(1) has five subunits: alpha(3), beta(3), gamma(1), delta(1), epsilon(1). CF(0) has three main subunits: a(1), b(2) and c(9-12). The alpha and beta chains form an alternating ring which encloses part of the gamma chain. CF(1) is attached to CF(0) by a central stalk formed by the gamma and epsilon chains, while a peripheral stalk is formed by the delta and b chains.

It localises to the cell inner membrane. The enzyme catalyses ATP + H2O + 4 H(+)(in) = ADP + phosphate + 5 H(+)(out). Its function is as follows. Produces ATP from ADP in the presence of a proton gradient across the membrane. The alpha chain is a regulatory subunit. The protein is ATP synthase subunit alpha of Agrobacterium fabrum (strain C58 / ATCC 33970) (Agrobacterium tumefaciens (strain C58)).